The primary structure comprises 962 residues: Protease 3 (962 aa).

The signal sequence occupies residues 1–23 (MPRSTWFKALLLLVALWGPAVQA). His88 provides a ligand contact to Zn(2+). The active-site Proton acceptor is Glu91. Zn(2+) is bound by residues His92 and Glu169.

Belongs to the peptidase M16 family. As to quaternary structure, monomer. The cofactor is Zn(2+).

Its subcellular location is the periplasm. It catalyses the reaction Preferential cleavage of 16-Tyr-|-Leu-17 and 25-Phe-|-Tyr-26 bonds of oxidized insulin B chain. Also acts on other substrates of Mw less than 7 kDa such as insulin and glucagon.. Endopeptidase that degrades small peptides of less than 7 kDa, such as glucagon and insulin. The protein is Protease 3 (ptrA) of Salmonella typhi.